The chain runs to 364 residues: Fructose-bisphosphate aldolase A (364 aa).

Tyr5 is modified (phosphotyrosine). Residue Thr9 is modified to Phosphothreonine. A phosphoserine mark is found at Ser36 and Ser39. At Lys42 the chain carries N6-acetyllysine; alternate. Lys42 participates in a covalent cross-link: Glycyl lysine isopeptide (Lys-Gly) (interchain with G-Cter in SUMO1); alternate. Lys42 participates in a covalent cross-link: Glycyl lysine isopeptide (Lys-Gly) (interchain with G-Cter in SUMO2); alternate. Arg43 serves as a coordination point for beta-D-fructose 1,6-bisphosphate. Residue Ser46 is modified to Phosphoserine. Lys99 carries the N6-(2-hydroxyisobutyryl)lysine modification. Residue Lys108 is modified to N6-acetyllysine. The residue at position 111 (Lys111) is an N6-acetyllysine; alternate. Lys111 is modified (N6-malonyllysine; alternate). Position 132 is a phosphoserine (Ser132). An N6-(2-hydroxyisobutyryl)lysine modification is found at Lys147. Glu188 acts as the Proton acceptor in catalysis. Lys230 (schiff-base intermediate with dihydroxyacetone-P) is an active-site residue. Ser272 carries the phosphoserine modification. Residues 272-274 (SGG), Ser301, and Arg304 contribute to the beta-D-fructose 1,6-bisphosphate site. Position 312 is an N6-malonyllysine (Lys312). Residue Lys330 is modified to N6-acetyllysine.

It belongs to the class I fructose-bisphosphate aldolase family. In terms of assembly, homotetramer. Interacts with SNX9 and WAS. Interacts with FBP2; the interaction blocks FBP2 inhibition by physiological concentrations of AMP and reduces inhibition by Ca(2+).

It is found in the cytoplasm. The protein localises to the myofibril. The protein resides in the sarcomere. Its subcellular location is the i band. It localises to the m line. It catalyses the reaction beta-D-fructose 1,6-bisphosphate = D-glyceraldehyde 3-phosphate + dihydroxyacetone phosphate. It participates in carbohydrate degradation; glycolysis; D-glyceraldehyde 3-phosphate and glycerone phosphate from D-glucose: step 4/4. Catalyzes the reversible conversion of beta-D-fructose 1,6-bisphosphate (FBP) into two triose phosphate and plays a key role in glycolysis and gluconeogenesis. In addition, may also function as scaffolding protein. The chain is Fructose-bisphosphate aldolase A (ALDOA) from Pan troglodytes (Chimpanzee).